A 710-amino-acid chain; its full sequence is Choline transporter-like protein 2 (710 aa).

At methionine 1–aspartate 34 the chain is on the cytoplasmic side. A helical membrane pass occupies residues isoleucine 35–alanine 55. The Extracellular portion of the chain corresponds to tryptophan 56–tryptophan 236. Asparagine 147, asparagine 190, and asparagine 204 each carry an N-linked (GlcNAc...) asparagine glycan. A helical transmembrane segment spans residues tyrosine 237–leucine 257. Residues arginine 258–leucine 260 lie on the Cytoplasmic side of the membrane. The helical transmembrane segment at alanine 261–phenylalanine 281 threads the bilayer. At histidine 282–tryptophan 319 the chain is on the extracellular side. The helical transmembrane segment at leucine 320–leucine 340 threads the bilayer. Topologically, residues arginine 341–proline 368 are cytoplasmic. Residues leucine 369–leucine 389 form a helical membrane-spanning segment. The Extracellular segment spans residues serine 390 to leucine 458. Residues asparagine 401, asparagine 418, and asparagine 421 are each glycosylated (N-linked (GlcNAc...) asparagine). The helical transmembrane segment at tryptophan 459–tryptophan 481 threads the bilayer. Residues alanine 482–serine 508 are Cytoplasmic-facing. The helical transmembrane segment at leucine 509 to leucine 529 threads the bilayer. The Extracellular portion of the chain corresponds to aspartate 530–tyrosine 567. Residues isoleucine 568–leucine 588 form a helical membrane-spanning segment. Topologically, residues methionine 589–aspartate 603 are cytoplasmic. The chain crosses the membrane as a helical span at residues phenylalanine 604–phenylalanine 624. The Extracellular portion of the chain corresponds to phenylalanine 625–tyrosine 642. The helical transmembrane segment at tryptophan 643 to valine 663 threads the bilayer. Residues tyrosine 664–lysine 710 are Cytoplasmic-facing.

It belongs to the CTL (choline transporter-like) family.

Its subcellular location is the cell membrane. The protein resides in the mitochondrion outer membrane. The enzyme catalyses choline(out) + n H(+)(in) = choline(in) + n H(+)(out). It catalyses the reaction ethanolamine(out) + n H(+)(in) = ethanolamine(in) + n H(+)(out). Its function is as follows. Choline/H+ antiporter, mainly in mitochodria. Also acts as a low-affinity ethanolamine/H+ antiporter, regulating the supply of extracellular ethanolamine (Etn) for the CDP-Etn pathway, redistribute intracellular Etn and balance the CDP-Cho and CDP-Etn arms of the Kennedy pathway. The protein is Choline transporter-like protein 2 (slc44a2) of Xenopus laevis (African clawed frog).